A 291-amino-acid polypeptide reads, in one-letter code: Trimeric intracellular cation channel type B (291 aa).

The Lumenal segment spans residues 1–16 (MEYPWDDLTLAFSRTS). Residues 17–33 (MFPFFDIAHYLVSVMAL) form a helical membrane-spanning segment. Residues 34-47 (KQRPGAVAAAWSNP) are Cytoplasmic-facing. The helical transmembrane segment at 48 to 69 (LSSWLSAMLHCFGGGILSCILL) threads the bilayer. The Lumenal segment spans residues 70 to 80 (AEPPLKFLTNH). The helical transmembrane segment at 81–99 (TNILLASSIWYIVFFCPRD) threads the bilayer. At 100–103 (LVSQ) the chain is on the cytoplasmic side. A helical membrane pass occupies residues 104–122 (GYSYQPIQLLAAGMKEVTR). Positions 118 and 122 each coordinate a 1,2-diacyl-sn-glycero-3-phospho-(1D-myo-inositol-4,5-bisphosphate). At 123-138 (TWKIVGGVAHANGYYR) the chain is on the lumenal side. Residues 139 to 156 (NGWIVMIAVGWARGAGGA) form a helical membrane-spanning segment. Residues 157 to 179 (IITACEQLLKGDWKPEGDEWLKM) lie on the Cytoplasmic side of the membrane. The chain crosses the membrane as a helical span at residues 180 to 197 (SFPCKVTLLGSIMFTFQH). The Lumenal portion of the chain corresponds to 198–206 (TRHLAISKH). A helical membrane pass occupies residues 207–225 (DLMFLYTIFLVTIKVTMMM). Residues 226 to 291 (TKDAAVTLTP…SAKRHAKKED (66 aa)) are Cytoplasmic-facing. Positions 254–291 (LSEKKAEVKPSSNGSASSASKRGTEPPSSAKRHAKKED) are disordered. Positions 264–273 (SSNGSASSAS) are enriched in low complexity.

Belongs to the TMEM38 family. In terms of assembly, homotrimer; conformation seems to be controled by binding to diacylglycerol (DAG).

It is found in the endoplasmic reticulum membrane. The catalysed reaction is K(+)(in) = K(+)(out). Channel activity is activated by increased cytosolic Ca(2+) levels and blocked by luminal high Ca(2+) levels. Its function is as follows. Intracellular monovalent cation channel required for maintenance of rapid intracellular calcium release. Acts as a potassium counter-ion channel that functions in synchronization with calcium release from intracellular stores. Activated by increased cytosolic Ca(2+) levels. This Rattus norvegicus (Rat) protein is Trimeric intracellular cation channel type B (Tmem38b).